Consider the following 419-residue polypeptide: MAATKREPLRPISSNAGTVERRARGGAAAAAAAKEKEKENEVPTEIGRGKDGGEKKPPVVVAVVVPPAPPLKPSSLQVRMKAEEEKEREEEEEGSSPAVALVAGLQVRMGPRGRELLLPPPPPPPPLPLPTSSSYEAWDLSDNEAAPASSWATLPNRALLCRPLPLDVGRCTCIIAKETLAAAAAGARGVALYSLYTNEGQGRQDRKLAVARHRRRRGRSEFVVAQNLDGIFCTSDKNFLGTLSSNLVGSRYRIWGQGNRVDEIKSQSKRLLGVVAFAPTVTTLTGSFRSMRAWIPKNQSIHLKNSNSAQIQHISGLPKDWQEKKIKADQLCSRSPFYNNMTKRYELDFRERAGRMGYKVQPSVKNFQMTLEEKGRQTILQLGRIGKSKYIMDFRYPLTGYQALCICLASIDSKLCCTL.

The segment at 1-96 (MAATKREPLR…EREEEEEGSS (96 aa)) is disordered. Residues 33 to 57 (AKEKEKENEVPTEIGRGKDGGEKKP) show a composition bias toward basic and acidic residues.

It belongs to the TUB family.

The sequence is that of Tubby-like protein 4 (TULP4) from Oryza sativa subsp. japonica (Rice).